Consider the following 480-residue polypeptide: ATP-grasp enzyme ankG (480 aa).

The disordered stretch occupies residues 1 to 30 (MYQISLKATKSAAEPTSSTDASHDDRQVER). The segment covering 21–30 (ASHDDRQVER) has biased composition (basic and acidic residues).

It carries out the reaction NK13650 D + L-aspartate + ATP = NK13650 C + AMP + diphosphate + H(+). It catalyses the reaction NK13650 B + L-aspartate + ATP = NK13650 A + AMP + diphosphate + H(+). The protein operates within secondary metabolite biosynthesis. In terms of biological role, ATP-grasp enzyme; part of the ank cluster that mediates the biosynthesis of NK13650 C, a highly modified cyclo-arginine-tyrosine dipeptide. AnkG catalyzes the last step of the pathway via amidation NK13650 D with L-Asp to produce NK13650 C. AnkG also amidates NK13650 B into NK13650 A. Within the pathway, the cyclodipeptide synthase ankA acts as the scaffold-generating enzyme and is responsible for formation of the cyclo-Arg-Tyr diketopiperazine (cRY) from L-Arg and L-Tyr. The ankA product cRY is desaturated by the cytochrome P450 monooxygenase ankB to yield a dehydro-cyclodipeptide intermediate. The FAD-dependent monooxygenase ankC then installs the m-OH, ankD catalyzes the attachment of L-homoserine, and ankE ligates citrate to the ankD product to yield NK13650 B. The O-methyltransferase ankF is responsible for methylation of the C-17 phenol group of NK13650 B to produce NK13650 D. Amidation of NK13650 D with L-Asp by ankG then leads to the production of NK13650 C, whereas amidation of NK13650 B produces NK13650 A. In Aspergillus thermomutatus (Neosartorya pseudofischeri), this protein is ATP-grasp enzyme ankG.